The primary structure comprises 511 residues: MKEYRVYLERARFFQQDFLYPLIFREYIYGLAYSHKDPRSIFVENGGYDNKYSLLNVKRLITRMYQQNHLIISTNDSNKNPFFGYNKNFDFQIIAEGFAILVEIPFLPQLSSSLEEAEIIKSYKNVRSIHSIFPFLEDKFTYLNYVSDIRIPYPIHLEILVQILRYWVKDVSFFHLLRLFLYDFSNWIPTKKSISTFSKSNPRLFLFLYNFYVCEYESIFLFLRNKSSHLRLKSFSVFFERIFFYAKREHLVEVFSKDFSYTLPFFKDPNIHYVRYQGKCILASKNVPFLMNKWNHYFIHLWQCFFDVWSQPRTININQLSEHSFQLLGYFSNVRLNRSVVRSQMLQNTFLIEIVSKKLDIIVPFIPLIRSLAKAKFCNVLGHPISKPVWADSSDFDIIERFLRICRNLCHYYHGSSTKKSLYRIKYILRLSCIKTLACKHKSTVRAFLNRSGSEELLEEFFTEEEEILPWKFQILTLLCHSQSFSLHRYERKYRIWYLDILFSNDLVNDE.

This sequence belongs to the intron maturase 2 family. MatK subfamily.

The protein localises to the plastid. It is found in the chloroplast. In terms of biological role, usually encoded in the trnK tRNA gene intron. Probably assists in splicing its own and other chloroplast group II introns. This is Maturase K from Trifolium burchellianum (Wild clover).